The following is a 642-amino-acid chain: Probable serine/threonine-protein kinase drkA (642 aa).

The N-terminal stretch at Met1 to Ser23 is a signal peptide. Over Ile24–Tyr322 the chain is Extracellular. Over residues Ser106–Pro128 the composition is skewed to low complexity. A disordered region spans residues Ser106–Asn136. 5 N-linked (GlcNAc...) asparagine glycosylation sites follow: Asn136, Asn140, Asn158, Asn244, and Asn271. The helical transmembrane segment at Leu323 to Ile343 threads the bilayer. The Cytoplasmic segment spans residues Arg344–Leu642. In terms of domain architecture, Protein kinase spans Ile374–Ile627. Residues Ile380–Val388 and Lys401 contribute to the ATP site. The active-site Proton acceptor is Asp497.

This sequence belongs to the protein kinase superfamily. TKL Ser/Thr protein kinase family.

It localises to the membrane. The catalysed reaction is L-seryl-[protein] + ATP = O-phospho-L-seryl-[protein] + ADP + H(+). It carries out the reaction L-threonyl-[protein] + ATP = O-phospho-L-threonyl-[protein] + ADP + H(+). The sequence is that of Probable serine/threonine-protein kinase drkA (drkA) from Dictyostelium discoideum (Social amoeba).